A 656-amino-acid chain; its full sequence is tRNA(Met) cytidine acetyltransferase TmcA (656 aa).

Residues Q145, 167–176 (GRGKSALLGM), and R291 contribute to the ATP site. Positions 368 to 542 (SEGKYNRQFF…SGCYSAIALK (175 aa)) constitute an N-acetyltransferase domain. Acetyl-CoA is bound by residues 474-476 (IAV), 481-487 (QQKGIGQ), and E510.

This sequence belongs to the RNA cytidine acetyltransferase family. TmcA subfamily.

The protein localises to the cytoplasm. The catalysed reaction is cytidine(34) in elongator tRNA(Met) + acetyl-CoA + ATP + H2O = N(4)-acetylcytidine(34) in elongator tRNA(Met) + ADP + phosphate + CoA + H(+). Catalyzes the formation of N(4)-acetylcytidine (ac(4)C) at the wobble position of tRNA(Met), by using acetyl-CoA as an acetyl donor and ATP (or GTP). In Haemophilus influenzae (strain ATCC 51907 / DSM 11121 / KW20 / Rd), this protein is tRNA(Met) cytidine acetyltransferase TmcA.